The primary structure comprises 179 residues: Nuclear transcription factor Y subunit B (179 aa).

A disordered region spans residues M1–Q32. Over residues P8 to S28 the composition is skewed to gly residues. A DNA-binding region spans residues L36–S42. The tract at residues V63–I74 is subunit association domain (SAD). The tract at residues S147 to V179 is disordered.

Belongs to the NFYB/HAP3 subunit family. In terms of assembly, heterotrimeric transcription factor composed of three components, NF-YA, NF-YB and NF-YC. NF-YB and NF-YC must interact and dimerize for NF-YA association and DNA binding.

It is found in the nucleus. Component of the NF-Y/HAP transcription factor complex. The NF-Y complex stimulates the transcription of various genes by recognizing and binding to a CCAAT motif in promoters. This is Nuclear transcription factor Y subunit B (NFY2) from Zea mays (Maize).